The chain runs to 202 residues: GPI-anchored hemophore cfmB (202 aa).

Residues 1–18 (MHFSRTSLILFAAGLASA) form the signal peptide. The 90-residue stretch at 19–108 (QLPNVPGCSL…STTASETATT (90 aa)) folds into the CFEM domain. Disulfide bonds link Cys26–Cys67, Cys30–Cys62, Cys40–Cys48, and Cys50–Cys83. Asp45 contributes to the heme binding site. Residues 94-171 (PVGAASTTAS…PSSQSTSASA (78 aa)) are disordered. The span at 97–171 (AASTTASETA…PSSQSTSASA (75 aa)) shows a compositional bias: low complexity. The GPI-anchor amidated asparagine moiety is linked to residue Asn180. The propeptide at 181–202 (AGSEKANVAGVVAVAAAALYLL) is removed in mature form.

It belongs to the RBT5 family. The GPI-anchor is attached to the protein in the endoplasmic reticulum and serves to target the protein to the cell surface. There, the glucosamine-inositol phospholipid moiety is cleaved off and the GPI-modified mannoprotein is covalently attached via its lipidless GPI glycan remnant to the 1,6-beta-glucan of the outer cell wall layer.

It localises to the secreted. Its subcellular location is the cell wall. The protein localises to the cell membrane. In terms of biological role, GPI-anchored cell wall protein involved in stabilizing the cell wall. Not implicated in virulence, heme uptake and biofilm formation. The sequence is that of GPI-anchored hemophore cfmB from Aspergillus fumigatus (strain ATCC MYA-4609 / CBS 101355 / FGSC A1100 / Af293) (Neosartorya fumigata).